A 228-amino-acid chain; its full sequence is UPF0134 protein MPN_137 (228 aa).

It belongs to the UPF0134 family.

This Mycoplasma pneumoniae (strain ATCC 29342 / M129 / Subtype 1) (Mycoplasmoides pneumoniae) protein is UPF0134 protein MPN_137.